The primary structure comprises 138 residues: Ribosome-binding factor A (138 aa).

The protein belongs to the RbfA family. In terms of assembly, monomer. Binds 30S ribosomal subunits, but not 50S ribosomal subunits or 70S ribosomes.

The protein localises to the cytoplasm. One of several proteins that assist in the late maturation steps of the functional core of the 30S ribosomal subunit. Associates with free 30S ribosomal subunits (but not with 30S subunits that are part of 70S ribosomes or polysomes). Required for efficient processing of 16S rRNA. May interact with the 5'-terminal helix region of 16S rRNA. This Paracoccus denitrificans (strain Pd 1222) protein is Ribosome-binding factor A.